The chain runs to 222 residues: Protein DEHYDRATION-INDUCED 19 homolog 6 (222 aa).

A Phosphoserine modification is found at Ser116.

The protein belongs to the Di19 family. Post-translationally, phosphorylated in vitro by CPK3 or CPK11. Expressed in seedlings, roots, leaves, stems, flowers and siliques.

The protein resides in the nucleus. The chain is Protein DEHYDRATION-INDUCED 19 homolog 6 (DI19-6) from Arabidopsis thaliana (Mouse-ear cress).